We begin with the raw amino-acid sequence, 122 residues long: Small ribosomal subunit protein bS6 (122 aa).

Belongs to the bacterial ribosomal protein bS6 family.

Its function is as follows. Binds together with bS18 to 16S ribosomal RNA. This chain is Small ribosomal subunit protein bS6, found in Methylibium petroleiphilum (strain ATCC BAA-1232 / LMG 22953 / PM1).